Reading from the N-terminus, the 340-residue chain is Holliday junction branch migration complex subunit RuvB (340 aa).

Residues 1–184 are large ATPase domain (RuvB-L); it reads MNENLDPTNQ…FGIQSRLQYY (184 aa). Residues Leu23, Arg24, Gly65, Lys68, Thr69, Thr70, 131–133, Arg174, Tyr184, and Arg221 contribute to the ATP site; that span reads EDF. Thr69 contributes to the Mg(2+) binding site. The segment at 185–255 is small ATPAse domain (RuvB-S); it reads NAELLTTIVQ…IAKFALNALH (71 aa). Residues 258–340 are head domain (RuvB-H); it reads AHGLDEMDNK…VKANVQGGLF (83 aa). Positions 313 and 318 each coordinate DNA.

The protein belongs to the RuvB family. As to quaternary structure, homohexamer. Forms an RuvA(8)-RuvB(12)-Holliday junction (HJ) complex. HJ DNA is sandwiched between 2 RuvA tetramers; dsDNA enters through RuvA and exits via RuvB. An RuvB hexamer assembles on each DNA strand where it exits the tetramer. Each RuvB hexamer is contacted by two RuvA subunits (via domain III) on 2 adjacent RuvB subunits; this complex drives branch migration. In the full resolvosome a probable DNA-RuvA(4)-RuvB(12)-RuvC(2) complex forms which resolves the HJ.

It localises to the cytoplasm. The catalysed reaction is ATP + H2O = ADP + phosphate + H(+). Its function is as follows. The RuvA-RuvB-RuvC complex processes Holliday junction (HJ) DNA during genetic recombination and DNA repair, while the RuvA-RuvB complex plays an important role in the rescue of blocked DNA replication forks via replication fork reversal (RFR). RuvA specifically binds to HJ cruciform DNA, conferring on it an open structure. The RuvB hexamer acts as an ATP-dependent pump, pulling dsDNA into and through the RuvAB complex. RuvB forms 2 homohexamers on either side of HJ DNA bound by 1 or 2 RuvA tetramers; 4 subunits per hexamer contact DNA at a time. Coordinated motions by a converter formed by DNA-disengaged RuvB subunits stimulates ATP hydrolysis and nucleotide exchange. Immobilization of the converter enables RuvB to convert the ATP-contained energy into a lever motion, pulling 2 nucleotides of DNA out of the RuvA tetramer per ATP hydrolyzed, thus driving DNA branch migration. The RuvB motors rotate together with the DNA substrate, which together with the progressing nucleotide cycle form the mechanistic basis for DNA recombination by continuous HJ branch migration. Branch migration allows RuvC to scan DNA until it finds its consensus sequence, where it cleaves and resolves cruciform DNA. The polypeptide is Holliday junction branch migration complex subunit RuvB (Flavobacterium psychrophilum (strain ATCC 49511 / DSM 21280 / CIP 103535 / JIP02/86)).